Reading from the N-terminus, the 393-residue chain is Interferon regulatory factor 9 (393 aa).

The segment at residues 9 to 116 (TRKLRNWVVE…EPYKVYQLLP (108 aa)) is a DNA-binding region (IRF tryptophan pentad repeat). Disordered regions lie at residues 120-151 (VSGQ…AMQN) and 163-202 (LNNE…APFQ). Ser139 is modified (phosphoserine).

The protein belongs to the IRF family. Interacts with STAT2 in the cytoplasm. Forms the interferon-stimulated gene factor 3 complex (ISGF3) with the heterodimer STAT1:STAT2; upon stimulation. As to quaternary structure, (Microbial infection) Interacts with measles virus V protein; this interaction prevents the binding of IRF9 to STAT2 and thereby the type I interferon signaling pathway. In terms of processing, (Microbial infection) Ubiquitinated by Herpes simplex virus 2 E3 ubiquitin ligase ICP22.

The protein localises to the cytoplasm. Its subcellular location is the nucleus. Transcription factor that plays an essential role in anti-viral immunity. It mediates signaling by type I IFNs (IFN-alpha and IFN-beta). Following type I IFN binding to cell surface receptors, Jak kinases (TYK2 and JAK1) are activated, leading to tyrosine phosphorylation of STAT1 and STAT2. IRF9/ISGF3G associates with the phosphorylated STAT1:STAT2 dimer to form a complex termed ISGF3 transcription factor, that enters the nucleus. ISGF3 binds to the IFN stimulated response element (ISRE) to activate the transcription of interferon stimulated genes, which drive the cell in an antiviral state. This chain is Interferon regulatory factor 9 (IRF9), found in Homo sapiens (Human).